Here is a 263-residue protein sequence, read N- to C-terminus: Acyl-[acyl-carrier-protein]--UDP-N-acetylglucosamine O-acyltransferase (263 aa).

This sequence belongs to the transferase hexapeptide repeat family. LpxA subfamily. As to quaternary structure, homotrimer.

The protein resides in the cytoplasm. The catalysed reaction is a (3R)-hydroxyacyl-[ACP] + UDP-N-acetyl-alpha-D-glucosamine = a UDP-3-O-[(3R)-3-hydroxyacyl]-N-acetyl-alpha-D-glucosamine + holo-[ACP]. Its pathway is glycolipid biosynthesis; lipid IV(A) biosynthesis; lipid IV(A) from (3R)-3-hydroxytetradecanoyl-[acyl-carrier-protein] and UDP-N-acetyl-alpha-D-glucosamine: step 1/6. Functionally, involved in the biosynthesis of lipid A, a phosphorylated glycolipid that anchors the lipopolysaccharide to the outer membrane of the cell. The chain is Acyl-[acyl-carrier-protein]--UDP-N-acetylglucosamine O-acyltransferase from Campylobacter jejuni subsp. jejuni serotype O:23/36 (strain 81-176).